The following is a 59-amino-acid chain: Large ribosomal subunit protein bL32 (59 aa).

A disordered region spans residues M1–A28.

Belongs to the bacterial ribosomal protein bL32 family.

In Aromatoleum aromaticum (strain DSM 19018 / LMG 30748 / EbN1) (Azoarcus sp. (strain EbN1)), this protein is Large ribosomal subunit protein bL32.